A 711-amino-acid polypeptide reads, in one-letter code: Transferrin-binding protein B (711 aa).

Positions methionine 1–alanine 20 are cleaved as a signal peptide. Cysteine 21 carries N-palmitoyl cysteine lipidation. Cysteine 21 is lipidated: S-diacylglycerol cysteine. 7 disordered regions span residues valine 33–glutamine 58, serine 79–lysine 105, aspartate 118–alanine 146, serine 225–leucine 251, leucine 370–serine 396, proline 437–asparagine 492, and threonine 682–glutamine 711. A compositionally biased stretch (polar residues) spans aspartate 46–lysine 56. Residues lysine 96–lysine 105 are compositionally biased toward basic and acidic residues. Residues isoleucine 119–alanine 146 are compositionally biased toward polar residues. The span at glycine 373–serine 393 shows a compositional bias: low complexity. Residues phenylalanine 457 to alanine 472 show a composition bias toward basic and acidic residues. Polar residues-rich tracts occupy residues alanine 474–asparagine 492 and lysine 684–threonine 699.

This sequence belongs to the TbpB family. Isotype II subfamily. As to quaternary structure, binds only human holo-transferrin (TF), via the TF C-terminus. Forms a large complex with TbpA and TF. Interacts via its C-terminal domain with Slam1.

It is found in the cell outer membrane. Its subcellular location is the cell surface. Its function is as follows. Neisseria acquires iron by extracting it from serum transferrin (TF) in its human host. Acts as a TF receptor and is required for TF utilization. Involved in the initial capture of TF. Helps select only those TF molecules that can be used as an iron source and concentrates them on the cell surface, maintaining the iron-loaded status of the TF C-terminal lobe until its delivery to TbpA. The polypeptide is Transferrin-binding protein B (tbpB) (Neisseria meningitidis serogroup B).